The chain runs to 250 residues: Triosephosphate isomerase (250 aa).

Substrate is bound at residue 9 to 11 (NWK). The active-site Electrophile is His-94. The active-site Proton acceptor is Glu-166. Substrate-binding positions include Gly-172, Ser-211, and 232–233 (GG).

It belongs to the triosephosphate isomerase family. As to quaternary structure, homodimer.

Its subcellular location is the cytoplasm. The enzyme catalyses D-glyceraldehyde 3-phosphate = dihydroxyacetone phosphate. It functions in the pathway carbohydrate biosynthesis; gluconeogenesis. It participates in carbohydrate degradation; glycolysis; D-glyceraldehyde 3-phosphate from glycerone phosphate: step 1/1. Functionally, involved in the gluconeogenesis. Catalyzes stereospecifically the conversion of dihydroxyacetone phosphate (DHAP) to D-glyceraldehyde-3-phosphate (G3P). This Methylococcus capsulatus (strain ATCC 33009 / NCIMB 11132 / Bath) protein is Triosephosphate isomerase.